Consider the following 412-residue polypeptide: Candidapepsin-2 (412 aa).

A signal peptide (or 18, or 21) is located at residues 1–25 (MTTIAIFTKNVLLAIAFALFAQGAA). Residues 26–61 (IPDPAKRDDNPGFVALDFEVTRKPLDVNATSELSKR) constitute a propeptide, activation peptide. A glycan (N-linked (GlcNAc...) asparagine) is linked at Asn53. The Peptidase A1 domain maps to 75 to 383 (YGIRVSVGSN…LDKETVLSRS (309 aa)). Asp93 is a catalytic residue. Cys108 and Cys113 are oxidised to a cystine. The active site involves Asp273. An intrachain disulfide couples Cys311 to Cys345.

This sequence belongs to the peptidase A1 family. O-glycosylated.

The protein localises to the secreted. The enzyme catalyses Preferential cleavage at the carboxyl of hydrophobic amino acids, but fails to cleave 15-Leu-|-Tyr-16, 16-Tyr-|-Leu-17 and 24-Phe-|-Phe-25 of insulin B chain. Activates trypsinogen, and degrades keratin.. The chain is Candidapepsin-2 (SAPP2) from Candida parapsilosis (Yeast).